Consider the following 290-residue polypeptide: Protoheme IX farnesyltransferase (290 aa).

A run of 9 helical transmembrane segments spans residues 8–28, 36–56, 81–101, 108–128, 133–153, 163–183, 209–229, 230–247, and 270–290; these read LTKP…YFLA, LSLL…GCVV, INIE…TGLL, LSAV…TMWY, VYGT…GYLA, VLLF…IAMF, IMIY…FGHT, GYEY…WFKV, and LAIT…SITF.

This sequence belongs to the UbiA prenyltransferase family. Protoheme IX farnesyltransferase subfamily.

It localises to the cell inner membrane. The catalysed reaction is heme b + (2E,6E)-farnesyl diphosphate + H2O = Fe(II)-heme o + diphosphate. It participates in porphyrin-containing compound metabolism; heme O biosynthesis; heme O from protoheme: step 1/1. Functionally, converts heme B (protoheme IX) to heme O by substitution of the vinyl group on carbon 2 of heme B porphyrin ring with a hydroxyethyl farnesyl side group. This chain is Protoheme IX farnesyltransferase, found in Aliivibrio salmonicida (strain LFI1238) (Vibrio salmonicida (strain LFI1238)).